The following is a 255-amino-acid chain: Ribosomal RNA small subunit methyltransferase A (255 aa).

Residues Asn-13, Leu-15, Gly-40, Glu-61, Asp-85, and Asn-103 each coordinate S-adenosyl-L-methionine.

This sequence belongs to the class I-like SAM-binding methyltransferase superfamily. rRNA adenine N(6)-methyltransferase family. RsmA subfamily.

The protein resides in the cytoplasm. It catalyses the reaction adenosine(1518)/adenosine(1519) in 16S rRNA + 4 S-adenosyl-L-methionine = N(6)-dimethyladenosine(1518)/N(6)-dimethyladenosine(1519) in 16S rRNA + 4 S-adenosyl-L-homocysteine + 4 H(+). Its function is as follows. Specifically dimethylates two adjacent adenosines (A1518 and A1519) in the loop of a conserved hairpin near the 3'-end of 16S rRNA in the 30S particle. May play a critical role in biogenesis of 30S subunits. This is Ribosomal RNA small subunit methyltransferase A from Dechloromonas aromatica (strain RCB).